Consider the following 28-residue polypeptide: Phospholipase A2 (28 aa).

Glycine 28 contacts Ca(2+).

It depends on Ca(2+) as a cofactor. Expressed by the venom gland.

It localises to the secreted. It carries out the reaction a 1,2-diacyl-sn-glycero-3-phosphocholine + H2O = a 1-acyl-sn-glycero-3-phosphocholine + a fatty acid + H(+). In terms of biological role, PLA2 catalyzes the calcium-dependent hydrolysis of the 2-acyl groups in 3-sn-phosphoglycerides. This Scolopendra dehaani (Thai centipede) protein is Phospholipase A2.